A 389-amino-acid polypeptide reads, in one-letter code: Aspartic protease 6 (389 aa).

An N-terminal signal peptide occupies residues 1–15 (MKTFILLAVLGLASA). The region spanning 71-384 (YLGNITIGTP…DIGNKRMGFA (314 aa)) is the Peptidase A1 domain. Asparagine 74 is a glycosylation site (N-linked (GlcNAc...) asparagine). Aspartate 89 is an active-site residue. Cysteine 102 and cysteine 106 are oxidised to a cystine. Residue aspartate 277 is part of the active site. A disulfide bridge links cysteine 312 with cysteine 344.

It belongs to the peptidase A1 family. Glycosylated. Has phosphorylcholine-substituted oligosaccharide N-glycans. In terms of tissue distribution, expressed in intestine, muscles, pharynx and hypodermis.

The protein localises to the secreted. Its function is as follows. Aspartic protease. The protein is Aspartic protease 6 of Caenorhabditis elegans.